The following is a 329-amino-acid chain: Ribosomal RNA small subunit methyltransferase H (329 aa).

Residues 39–41, Asp-56, Phe-85, Asp-106, and Gln-113 each bind S-adenosyl-L-methionine; that span reads GGY. Residues 289–308 form a disordered region; that stretch reads SGAIRPTPEEEARNPRARSA.

It belongs to the methyltransferase superfamily. RsmH family.

The protein localises to the cytoplasm. It carries out the reaction cytidine(1402) in 16S rRNA + S-adenosyl-L-methionine = N(4)-methylcytidine(1402) in 16S rRNA + S-adenosyl-L-homocysteine + H(+). Functionally, specifically methylates the N4 position of cytidine in position 1402 (C1402) of 16S rRNA. The polypeptide is Ribosomal RNA small subunit methyltransferase H (Novosphingobium aromaticivorans (strain ATCC 700278 / DSM 12444 / CCUG 56034 / CIP 105152 / NBRC 16084 / F199)).